We begin with the raw amino-acid sequence, 363 residues long: Pyrimidine monooxygenase RutA (363 aa).

FMN-binding positions include Ile-49–Lys-50, Asn-115, Glu-124, Arg-140–Tyr-141, and Ser-190.

It belongs to the NtaA/SnaA/DszA monooxygenase family. RutA subfamily.

It catalyses the reaction uracil + FMNH2 + NADH + O2 = (Z)-3-ureidoacrylate + FMN + NAD(+) + H2O + H(+). The enzyme catalyses thymine + FMNH2 + NADH + O2 = (Z)-2-methylureidoacrylate + FMN + NAD(+) + H2O + H(+). In terms of biological role, catalyzes the pyrimidine ring opening between N-3 and C-4 by an unusual flavin hydroperoxide-catalyzed mechanism, adding oxygen atoms in the process to yield ureidoacrylate peracid, that immediately reacts with FMN forming ureidoacrylate and FMN-N(5)-oxide. The FMN-N(5)-oxide reacts spontaneously with NADH to produce FMN. Requires the flavin reductase RutF to regenerate FMN in vivo. The protein is Pyrimidine monooxygenase RutA of Klebsiella pneumoniae subsp. pneumoniae (strain ATCC 700721 / MGH 78578).